The following is a 593-amino-acid chain: MASSTPSPATSSNAGADPNTTNLRPTTYDTWCGVAHGCTRKLGLKICGFLQRTNSLEEKSRLVSAFRERQSSKNLLSCENSDQGARFRRTETDFSNLFAQDLLPAKNGEEQTAQFLLEVVDILLNYVRKTFDRSTKVLDFHHPHQLLEGMEGFNLELSDHPESLEQILVDCRDTLKYGVRTGHPRFFNQLSTGLDIIGLAGEWLTSTANTNMFTYEIAPVFVLMEQITLKKMREIVGWSNKDGDGIFSPGGAISNMYSIMAARYKYFPEVKTKGMAAVPKLVLFTSEHSHYSIKKAGAALGFGTDNVILIKCNERGKIIPADLEAKILDAKQKGYVPLYVNATAGTTVYGAFDPIQEIADICEKYNLWLHVDAAWGGGLLMSRKHRHKLSGIERANSVTWNPHKMMGVLLQCSAILVKEKGILQGCNQMCAGYLFQPDKQYDVSYDTGDKAIQCGRHVDIFKFWLMWKAKGTVGFENQINKCLELADYLYAKIKNREEFEMVFDGEPEHTNVCFWYIPQSLRGVPDSPERREKLHRVAPKIKALMMESGTTMVGYQPQGDKANFFRMVISNPAATQSDIDFLIEEIERLGQDL.

Low complexity predominate over residues 1–12 (MASSTPSPATSS). The disordered stretch occupies residues 1 to 22 (MASSTPSPATSSNAGADPNTTN). Serine 77 carries the phosphoserine modification. A 4-aminobutanoate-binding site is contributed by 189 to 191 (QLS). The residue at position 404 (lysine 404) is an N6-(pyridoxal phosphate)lysine. Arginine 566 contacts 4-aminobutanoate.

The protein belongs to the group II decarboxylase family. In terms of assembly, homodimer. Pyridoxal 5'-phosphate is required as a cofactor.

It carries out the reaction L-glutamate + H(+) = 4-aminobutanoate + CO2. Catalyzes the synthesis of the inhibitory neurotransmitter gamma-aminobutyric acid (GABA) with pyridoxal 5'-phosphate as cofactor. This is Glutamate decarboxylase 1 (Gad1) from Mus musculus (Mouse).